The chain runs to 294 residues: Beta-lactamase SME-1 (294 aa).

An N-terminal signal peptide occupies residues 1-27 (MSNKVNFKTASFLFSVCLALSAFNAHA). A disulfide bridge links Cys-72 with Cys-242. Residue Ser-73 is the Nucleophile; acyl-ester intermediate of the active site. A beta-lactam is bound by residues Ser-73, Lys-76, Ser-133, and Asn-135. The Proton acceptor role is filled by Glu-172. An a beta-lactam-binding site is contributed by Thr-239.

Belongs to the class-A beta-lactamase family.

The catalysed reaction is a beta-lactam + H2O = a substituted beta-amino acid. Partially inhibited by the beta-lactamase-blocking agents, clavulanic acid and tazobactam. Not inhibited by EDTA. Its function is as follows. Class A beta-lactamase which confers resistance to the beta-lactam antibiotics, including penicillins, some cephalosporins and carbapenems, to JM109 strain E.coli. Acts via hydrolysis of the beta-lactam ring. Has penicillin-, cephalosporin- and carbapenem-hydrolyzing activities. This is Beta-lactamase SME-1 from Serratia marcescens.